A 373-amino-acid chain; its full sequence is UDP-N-acetylenolpyruvoylglucosamine reductase (373 aa).

Residues 30 to 203 (LACMADSVVT…SRVGFRLHTD (174 aa)) enclose the FAD-binding PCMH-type domain. Residue Arg-180 is part of the active site. Residue Ser-258 is the Proton donor of the active site. The active site involves Glu-356.

This sequence belongs to the MurB family. FAD is required as a cofactor.

It is found in the cytoplasm. It catalyses the reaction UDP-N-acetyl-alpha-D-muramate + NADP(+) = UDP-N-acetyl-3-O-(1-carboxyvinyl)-alpha-D-glucosamine + NADPH + H(+). It participates in cell wall biogenesis; peptidoglycan biosynthesis. In terms of biological role, cell wall formation. The sequence is that of UDP-N-acetylenolpyruvoylglucosamine reductase from Psychrobacter cryohalolentis (strain ATCC BAA-1226 / DSM 17306 / VKM B-2378 / K5).